A 116-amino-acid chain; its full sequence is Hydrogenase maturation factor HypA (116 aa).

Position 2 (histidine 2) interacts with Ni(2+). Zn(2+) is bound by residues cysteine 73, cysteine 76, cysteine 90, and cysteine 93.

The protein belongs to the HypA/HybF family.

In terms of biological role, involved in the maturation of [NiFe] hydrogenases. Required for nickel insertion into the metal center of the hydrogenase. This chain is Hydrogenase maturation factor HypA, found in Escherichia coli O157:H7.